A 238-amino-acid chain; its full sequence is Pyridoxine 5'-phosphate synthase (238 aa).

N7 and R18 together coordinate 3-amino-2-oxopropyl phosphate. H43 functions as the Proton acceptor in the catalytic mechanism. R45 and H50 together coordinate 1-deoxy-D-xylulose 5-phosphate. E70 functions as the Proton acceptor in the catalytic mechanism. T100 serves as a coordination point for 1-deoxy-D-xylulose 5-phosphate. Residue H190 is the Proton donor of the active site. Residues D191 and 213–214 each bind 3-amino-2-oxopropyl phosphate; that span reads GH.

The protein belongs to the PNP synthase family. In terms of assembly, homooctamer; tetramer of dimers.

The protein localises to the cytoplasm. The catalysed reaction is 3-amino-2-oxopropyl phosphate + 1-deoxy-D-xylulose 5-phosphate = pyridoxine 5'-phosphate + phosphate + 2 H2O + H(+). It functions in the pathway cofactor biosynthesis; pyridoxine 5'-phosphate biosynthesis; pyridoxine 5'-phosphate from D-erythrose 4-phosphate: step 5/5. In terms of biological role, catalyzes the complicated ring closure reaction between the two acyclic compounds 1-deoxy-D-xylulose-5-phosphate (DXP) and 3-amino-2-oxopropyl phosphate (1-amino-acetone-3-phosphate or AAP) to form pyridoxine 5'-phosphate (PNP) and inorganic phosphate. This Porphyromonas gingivalis (strain ATCC 33277 / DSM 20709 / CIP 103683 / JCM 12257 / NCTC 11834 / 2561) protein is Pyridoxine 5'-phosphate synthase.